We begin with the raw amino-acid sequence, 294 residues long: MKTKIIVIVGPTAVGKTALAIEVAKRFNGEVVSGDSQQVYRGLDIGTAKASPEEQAAVPHHLIDVREITESYSAFDFVSEAKMTIEDIQSRGKLAIIAGGTGLYIQSLLEGYHLGGETPYEEILAYRASLEPYSDEELAHLVEQAGLEIPQFNRRRAMRALEIAHFGQDLENQEILYEPLIICLDDERSQLYERINHRVDLMFEAGLLDEAKWLFDHSPNVQAAKGIGYKELFPYFRGEQTFEEARESLKQATRRFAKRQLTWFRNRMQVTFYQIGESGVQDRILSQIEEFLDD.

Residue 10-17 (GPTAVGKT) coordinates ATP. 12–17 (TAVGKT) contributes to the substrate binding site. The interaction with substrate tRNA stretch occupies residues 35-38 (DSQQ).

The protein belongs to the IPP transferase family. As to quaternary structure, monomer. Mg(2+) serves as cofactor.

It catalyses the reaction adenosine(37) in tRNA + dimethylallyl diphosphate = N(6)-dimethylallyladenosine(37) in tRNA + diphosphate. Its function is as follows. Catalyzes the transfer of a dimethylallyl group onto the adenine at position 37 in tRNAs that read codons beginning with uridine, leading to the formation of N6-(dimethylallyl)adenosine (i(6)A). This is tRNA dimethylallyltransferase from Streptococcus pneumoniae (strain Hungary19A-6).